We begin with the raw amino-acid sequence, 523 residues long: 2-isopropylmalate synthase (523 aa).

Residues 5–267 (VIIFDTTLRD…HTNINHHEIW (263 aa)) form the Pyruvate carboxyltransferase domain. Asp14, His202, His204, and Asn238 together coordinate Mn(2+). The regulatory domain stretch occupies residues 392-523 (RLDYFSVQSG…QNKENNKETV (132 aa)).

The protein belongs to the alpha-IPM synthase/homocitrate synthase family. LeuA type 1 subfamily. As to quaternary structure, homodimer. Mn(2+) serves as cofactor.

It is found in the cytoplasm. It catalyses the reaction 3-methyl-2-oxobutanoate + acetyl-CoA + H2O = (2S)-2-isopropylmalate + CoA + H(+). It participates in amino-acid biosynthesis; L-leucine biosynthesis; L-leucine from 3-methyl-2-oxobutanoate: step 1/4. Catalyzes the condensation of the acetyl group of acetyl-CoA with 3-methyl-2-oxobutanoate (2-ketoisovalerate) to form 3-carboxy-3-hydroxy-4-methylpentanoate (2-isopropylmalate). The chain is 2-isopropylmalate synthase from Klebsiella pneumoniae (strain 342).